The following is a 314-amino-acid chain: Secreted frizzled-related protein 5 (314 aa).

An N-terminal signal peptide occupies residues 1-21; that stretch reads MWVAWSARTAALALLLGALHG. Positions 45-162 constitute an FZ domain; it reads SKPPQCLDIP…PLDNDLCIAV (118 aa). 8 disulfide bridges follow: Cys-50–Cys-113, Cys-60–Cys-106, Cys-97–Cys-132, Cys-121–Cys-159, Cys-125–Cys-149, Cys-178–Cys-250, Cys-181–Cys-252, and Cys-195–Cys-300. The 123-residue stretch at 178 to 300 folds into the NTR domain; the sequence is CAQCEMEHSA…AVKFMFSYPC (123 aa).

The protein belongs to the secreted frizzled-related protein (sFRP) family.

Its subcellular location is the secreted. In terms of biological role, soluble frizzled-related proteins (sFRPS) function as modulators of Wnt signaling through direct interaction with Wnts. They have a role in regulating cell growth and differentiation in specific cell types. SFRP5 may be involved in determining the polarity of photoreceptor, and perhaps, other cells in the retina. The polypeptide is Secreted frizzled-related protein 5 (Sfrp5) (Mus musculus (Mouse)).